Reading from the N-terminus, the 182-residue chain is MPVRPARCYKRIKGPPYTREEYIHGAPMIQIPKFDMGTTSAAARAAFPLVAKLVVQERGQIRMQALEAARQMAYKYLSKYVGDANYYLRLEAVPHHVLRENRMLAMAGADRLQEGMRLAFGSPAGRAARVEAGQVIFYAEFKPEHVAHMKEALRRASTKLPLPTRIVIEAKGDGGGKAATQG.

Belongs to the universal ribosomal protein uL16 family.

The sequence is that of Large ribosomal subunit protein uL16 from Pyrobaculum neutrophilum (strain DSM 2338 / JCM 9278 / NBRC 100436 / V24Sta) (Thermoproteus neutrophilus).